A 394-amino-acid chain; its full sequence is Alpha-2B adrenergic receptor (394 aa).

Residues 1 to 25 form a helical membrane-spanning segment; sequence AIAAVITFLILFTIFGNALVILAVL. Residues 26–36 lie on the Cytoplasmic side of the membrane; sequence TSRSLRAPQNL. The helical transmembrane segment at 37–62 threads the bilayer; sequence FLVSLAAADILVATLIIPFSLANELL. The Extracellular portion of the chain corresponds to 63 to 72; that stretch reads GYWYFRRTWC. Cysteine 72 and cysteine 151 form a disulfide bridge. Residues 73-95 form a helical membrane-spanning segment; it reads EVYLALDVLFCTSSIVHLCAISL. Topologically, residues 96-117 are cytoplasmic; that stretch reads DRYWAVSRALEYNCKRTPRRIK. A helical transmembrane segment spans residues 118–140; that stretch reads CIILTVWLIAAAISLPPLIYKGD. The Extracellular segment spans residues 141 to 156; that stretch reads QGPQPHGAPQCKLNQE. Residues 157–180 traverse the membrane as a helical segment; that stretch reads AWYILSSSLGSFFVPCLIMILVYL. Over 181–358 the chain is Cytoplasmic; that stretch reads RIYLIAKRSH…LSREKRFTFV (178 aa). The segment at 191–318 is disordered; that stretch reads RRGPRAKGGP…GSPPLQQPQG (128 aa). The segment covering 281-298 has biased composition (acidic residues); the sequence is LEEEAEEEEEEEEEEDEP. The span at 299–312 shows a compositional bias: low complexity; it reads QAVPVSPASVGSPP. A helical membrane pass occupies residues 359-382; it reads LAVVIGVFVLCWFPFFFSYSLSAI. Over 383–391 the chain is Extracellular; it reads CPQQCRVPH. A helical membrane pass occupies residues 392-394; that stretch reads GLF.

It belongs to the G-protein coupled receptor 1 family. Adrenergic receptor subfamily. ADRA2B sub-subfamily. In terms of assembly, interacts with RAB26. Interacts with PPP1R9B. Interacts with GGA1, GGA2 and GGA3.

It localises to the cell membrane. In terms of biological role, alpha-2 adrenergic receptors mediate the catecholamine-induced inhibition of adenylate cyclase through the action of G proteins. The polypeptide is Alpha-2B adrenergic receptor (ADRA2B) (Oryctolagus cuniculus (Rabbit)).